The chain runs to 330 residues: G-protein coupled receptor 3 (330 aa).

At 1–42 (MMWGAGSSMAWFSAGSGSVNVSSVDPVEEPTGPATLLPSPRA) the chain is on the extracellular side. Residue Asn20 is glycosylated (N-linked (GlcNAc...) asparagine). The chain crosses the membrane as a helical span at residues 43–62 (WDVVLCISGTLVSCENALVV). The Cytoplasmic portion of the chain corresponds to 63–74 (AIIVGTPAFRAP). The chain crosses the membrane as a helical span at residues 75-98 (MFLLVGSLAVADLLAGLGLVLHFA). At 99 to 110 (ADFCIGSPEMSL) the chain is on the extracellular side. The chain crosses the membrane as a helical span at residues 111 to 132 (MLVGVLAMAFTASIGSLLAITV). Residues 133-153 (DRYLSLYNALTYYSETTVTRT) lie on the Cytoplasmic side of the membrane. The helical transmembrane segment at 154–173 (YVMLALVWVGALGLGLVPVL) threads the bilayer. At 174–198 (AWNCRDGLTTCGVVYPLSKNHLVVL) the chain is on the extracellular side. The chain crosses the membrane as a helical span at residues 199–217 (AIAFFMVFGIMLQLYAQIC). Topologically, residues 218–245 (RIVCRHAQQIALQRHLLPASHYVATRKG) are cytoplasmic. Residues 246 to 272 (IATLAVVLGAFAACWLPFTVYCLLGDA) form a helical membrane-spanning segment. The Extracellular portion of the chain corresponds to 273–277 (DSPRL). Residues 278–299 (YTYLTLLPATYNSMINPVIYAF) form a helical membrane-spanning segment. Residues 300-330 (RNQDVQKVLWAICCCCSTSKIPFRSRSPSDV) are Cytoplasmic-facing. The S-palmitoyl cysteine moiety is linked to residue Cys313. Residues Ser324, Ser326, and Ser328 each carry the phosphoserine modification.

This sequence belongs to the G-protein coupled receptor 1 family. As to expression, expressed in both the forebrain and hindbrain, with the highest level in habenula. Lower level expression in the testis. Expressed in several metabolically active peripheral tissues, although at lower levels than in the central nervous system (CNS).

Its subcellular location is the cell membrane. Constitutively active G-protein coupled receptor that maintains high 3'-5'-cyclic adenosine monophosphate (cAMP) levels that a plays a role in serveral processes including meiotic arrest in oocytes or neuronal development via activation of numerous intracellular signaling pathways. Acts as an essential activator of thermogenic adipocytes and drives thermogenesis via its intrinsic G(s)-coupling activity without the requirement of a ligand. Has a potential role in modulating a number of brain functions, including behavioral responses to stress, amyloid-beta peptide generation in neurons. Stimulates neurite outgrowth in cerebellar granular neurons modulated via PKA, ERK, and most strongly PI3K-mediated signaling pathways. In Mus musculus (Mouse), this protein is G-protein coupled receptor 3 (Gpr3).